A 282-amino-acid chain; its full sequence is Pantothenate synthetase (282 aa).

Residue 33-40 participates in ATP binding; the sequence is MGALHAGH. The active-site Proton donor is histidine 40. Glutamine 64 contributes to the (R)-pantoate binding site. Glutamine 64 lines the beta-alanine pocket. Residue 150-153 coordinates ATP; the sequence is GEKD. (R)-pantoate is bound at residue glutamine 156. ATP contacts are provided by residues valine 179 and 187-190; that span reads LSSR.

The protein belongs to the pantothenate synthetase family. In terms of assembly, homodimer.

Its subcellular location is the cytoplasm. It carries out the reaction (R)-pantoate + beta-alanine + ATP = (R)-pantothenate + AMP + diphosphate + H(+). The protein operates within cofactor biosynthesis; (R)-pantothenate biosynthesis; (R)-pantothenate from (R)-pantoate and beta-alanine: step 1/1. Catalyzes the condensation of pantoate with beta-alanine in an ATP-dependent reaction via a pantoyl-adenylate intermediate. The chain is Pantothenate synthetase from Rhodospirillum rubrum (strain ATCC 11170 / ATH 1.1.1 / DSM 467 / LMG 4362 / NCIMB 8255 / S1).